Consider the following 198-residue polypeptide: Recombination protein RecR (198 aa).

The C4-type zinc finger occupies cysteine 57–cysteine 72. Residues threonine 80 to proline 175 enclose the Toprim domain.

Belongs to the RecR family.

Its function is as follows. May play a role in DNA repair. It seems to be involved in an RecBC-independent recombinational process of DNA repair. It may act with RecF and RecO. The polypeptide is Recombination protein RecR (Burkholderia ambifaria (strain MC40-6)).